Reading from the N-terminus, the 546-residue chain is E3 ubiquitin-protein ligase NEURL1B (546 aa).

The 157-residue stretch at 38–194 (APRFHAQAKG…ITDEVQLLES (157 aa)) folds into the NHR 1 domain. A Phosphothreonine modification is found at T199. In terms of domain architecture, NHR 2 spans 270 to 424 (ELRFHATRGP…GVAGQLRLLG (155 aa)). The segment at 429–490 (SSETMTPSGS…FSAPEPTGSR (62 aa)) is disordered. Positions 457–471 (SSSASESSLVTAPSS) are enriched in low complexity. The RING-type zinc-finger motif lies at 494–534 (CTVCFDSEVDTVIYTCGHMCLCHGCGLRLRRQARACCPICR).

Interacts with DLL1 and DLL4. In terms of tissue distribution, expressed in the limb buds and dorsal root ganglia. Expressed in brain and kidney and at low levels in the heart.

The protein localises to the cytoplasm. The enzyme catalyses S-ubiquitinyl-[E2 ubiquitin-conjugating enzyme]-L-cysteine + [acceptor protein]-L-lysine = [E2 ubiquitin-conjugating enzyme]-L-cysteine + N(6)-ubiquitinyl-[acceptor protein]-L-lysine.. Its pathway is protein modification; protein ubiquitination. E3 ubiquitin-protein ligase involved in regulation of the Notch pathway through influencing the stability and activity of several Notch ligands. In Mus musculus (Mouse), this protein is E3 ubiquitin-protein ligase NEURL1B (Neurl1b).